A 338-amino-acid polypeptide reads, in one-letter code: Glyceraldehyde-3-phosphate dehydrogenase (338 aa).

Residues 12 to 13 (RI), D34, and R79 each bind NAD(+). D-glyceraldehyde 3-phosphate is bound by residues 150–152 (SCT), T181, 210–211 (TG), and R233. C151 serves as the catalytic Nucleophile. Residue N315 participates in NAD(+) binding.

It belongs to the glyceraldehyde-3-phosphate dehydrogenase family. Homotetramer.

Its subcellular location is the cytoplasm. It catalyses the reaction D-glyceraldehyde 3-phosphate + phosphate + NAD(+) = (2R)-3-phospho-glyceroyl phosphate + NADH + H(+). The protein operates within carbohydrate degradation; glycolysis; pyruvate from D-glyceraldehyde 3-phosphate: step 1/5. The protein is Glyceraldehyde-3-phosphate dehydrogenase (gpd1) of Hypocrea atroviridis (Trichoderma atroviride).